Reading from the N-terminus, the 614-residue chain is ATP-dependent zinc metalloprotease FtsH (614 aa).

Topologically, residues 1–5 (MLPIR) are cytoplasmic. A helical transmembrane segment spans residues 6–26 (WFLALLAVFLAVAGLDLWFSQ). Topologically, residues 27–127 (TGARPSSATG…AVSARERTAS (101 aa)) are periplasmic. Residues 128 to 148 (IVHAIVHPLGLITLIVGILFV) form a helical membrane-spanning segment. At 149-614 (VQRYAGRFTA…AQHPPSALAG (466 aa)) the chain is on the cytoplasmic side. 214-221 (GPPGTGKT) lines the ATP pocket. Histidine 436 contributes to the Zn(2+) binding site. Glutamate 437 is a catalytic residue. The Zn(2+) site is built by histidine 440 and aspartate 513.

In the central section; belongs to the AAA ATPase family. It in the C-terminal section; belongs to the peptidase M41 family. As to quaternary structure, homohexamer. Requires Zn(2+) as cofactor.

It localises to the cell inner membrane. Its function is as follows. Acts as a processive, ATP-dependent zinc metallopeptidase for both cytoplasmic and membrane proteins. Plays a role in the quality control of integral membrane proteins. This Opitutus terrae (strain DSM 11246 / JCM 15787 / PB90-1) protein is ATP-dependent zinc metalloprotease FtsH.